The following is a 744-amino-acid chain: C-type polyheme cytochrome OmcB (744 aa).

A signal peptide spans 1-23 (MSRKVTKYSAVLAVSLFAAALAG). Cysteine 24 carries N-palmitoyl cysteine lipidation. Cysteine 24 carries the S-diacylglycerol cysteine lipid modification. Residues cysteine 48, cysteine 51, histidine 52, cysteine 81, cysteine 84, histidine 85, cysteine 107, cysteine 110, histidine 111, cysteine 141, cysteine 144, histidine 145, cysteine 185, cysteine 188, histidine 189, cysteine 225, cysteine 228, histidine 229, cysteine 303, cysteine 306, histidine 307, cysteine 382, cysteine 385, histidine 386, cysteine 430, cysteine 433, histidine 434, cysteine 480, cysteine 483, histidine 484, cysteine 555, cysteine 558, histidine 559, cysteine 587, cysteine 590, and histidine 591 each contribute to the heme c site.

Post-translationally, binds 12 heme c groups per subunit.

The protein localises to the cell outer membrane. In terms of biological role, involved in anaerobic respiration with Fe(3+) as terminal electron acceptor. Acts as an electron-transport mediator in the dissimilatory reduction of Fe(3+). The polypeptide is C-type polyheme cytochrome OmcB (omcB) (Geobacter sulfurreducens (strain DL-1 / KN400)).